Reading from the N-terminus, the 264-residue chain is Proteasome subunit beta type-4 (264 aa).

N-acetylmethionine is present on Met1. The propeptide occupies 1–45; sequence MEAFWESRAGHWAGGPAPGQFYRIPATPSGLMDPASAPCEGPITR. At Tyr102 the chain carries Phosphotyrosine.

Belongs to the peptidase T1B family. In terms of assembly, the 26S proteasome consists of a 20S proteasome core and two 19S regulatory subunits. The 20S proteasome core is a barrel-shaped complex made of 28 subunits that are arranged in four stacked rings. The two outer rings are each formed by seven alpha subunits, and the two inner rings are formed by seven beta subunits. The proteolytic activity is exerted by three beta-subunits PSMB5, PSMB6 and PSMB7. Forms a ternary complex with SMAD1 and OAZ1 before PSMB4 is incorporated into the 20S proteasome. Interacts with PRPF19. In terms of tissue distribution, detected in liver (at protein level).

The protein resides in the cytoplasm. Its subcellular location is the nucleus. In terms of biological role, non-catalytic component of the 20S core proteasome complex involved in the proteolytic degradation of most intracellular proteins. This complex plays numerous essential roles within the cell by associating with different regulatory particles. Associated with two 19S regulatory particles, forms the 26S proteasome and thus participates in the ATP-dependent degradation of ubiquitinated proteins. The 26S proteasome plays a key role in the maintenance of protein homeostasis by removing misfolded or damaged proteins that could impair cellular functions, and by removing proteins whose functions are no longer required. Associated with the PA200 or PA28, the 20S proteasome mediates ubiquitin-independent protein degradation. This type of proteolysis is required in several pathways including spermatogenesis (20S-PA200 complex) or generation of a subset of MHC class I-presented antigenic peptides (20S-PA28 complex). SMAD1/OAZ1/PSMB4 complex mediates the degradation of the CREBBP/EP300 repressor SNIP1. This is Proteasome subunit beta type-4 (Psmb4) from Mus musculus (Mouse).